A 310-amino-acid polypeptide reads, in one-letter code: Alpha/beta hydrolase domain-containing protein 17C (310 aa).

Catalysis depends on charge relay system residues Ser-192, Asp-257, and His-286.

The protein belongs to the AB hydrolase superfamily. ABHD17 family. Palmitoylated on cysteine residues located in a cysteine cluster at the N-terminus which promotes membrane localization.

The protein resides in the recycling endosome membrane. It localises to the cell projection. Its subcellular location is the dendritic spine. It is found in the postsynaptic density membrane. The enzyme catalyses S-hexadecanoyl-L-cysteinyl-[protein] + H2O = L-cysteinyl-[protein] + hexadecanoate + H(+). Functionally, hydrolyzes fatty acids from S-acylated cysteine residues in proteins. The chain is Alpha/beta hydrolase domain-containing protein 17C from Xenopus tropicalis (Western clawed frog).